Here is a 487-residue protein sequence, read N- to C-terminus: 1-hydroxycarotenoid 3,4-desaturase (487 aa).

FAD-binding positions include G12, E31, K39, 55 to 56 (SL), V247, N275, L431, G461, and 468 to 469 (GI).

Belongs to the carotenoid/retinoid oxidoreductase family. Monomer.

The catalysed reaction is rhodopin + A = (3E)-3,4-didehydrorhodopin + AH2. It carries out the reaction 1'-hydroxy-gamma-carotene + A = 1'-hydroxytorulene + AH2. The enzyme catalyses 1-hydroxy-all-trans-1,2-dihydro-neurosporene + A = demethylspheroidene + AH2. It catalyses the reaction 1,1'-dihydroxy-1,1',2,2'-tetrahydroneurosporene + A = 1'-hydroxy-demethylspheroidene + AH2. The catalysed reaction is 1,1'-dihydroxy-1,1',2,2'-tetrahydrolycopene + A = 1,1'-dihydroxy-3,4-didehydro-1,2-dihydrolycopene + AH2. It functions in the pathway carotenoid biosynthesis. Catalyzes the introduction of a C-3,4 double bond into 1'-hydroxy-gamma-carotene and rhodopin (1-hydroxylycopene) to yield 1'-hydroxytorulene and (3E)-3,4-didehydrorhodopin, respectively. Can also use 1-hydroxy-all-trans-1,2-dihydro-neurosporene, 1,1'-dihydroxy-1,1',2,2'-tetrahydroneurosporene and 1,1'-dihydroxy-1,1',2,2'-tetrahydrolycopene. Probably involved in the synthesis of myxol, a gamma-carotene derivative. May use FAD as a proton acceptor. This is 1-hydroxycarotenoid 3,4-desaturase from Nonlabens dokdonensis (strain DSM 17205 / KCTC 12402 / DSW-6) (Donghaeana dokdonensis).